We begin with the raw amino-acid sequence, 863 residues long: DNA mismatch repair protein MutS (863 aa).

Residue 617–624 (GPNMGGKS) coordinates ATP.

Belongs to the DNA mismatch repair MutS family.

Functionally, this protein is involved in the repair of mismatches in DNA. It is possible that it carries out the mismatch recognition step. This protein has a weak ATPase activity. The polypeptide is DNA mismatch repair protein MutS (Pseudomonas fluorescens (strain SBW25)).